A 2291-amino-acid chain; its full sequence is Spectrin beta chain (2291 aa).

The segment at 1-271 is actin-binding; the sequence is MTTDISIVRW…IITYVVTYYH (271 aa). 2 consecutive Calponin-homology (CH) domains span residues 50–154 and 169–274; these read SVQK…LRFQ and KSAK…HYFS. Spectrin repeat units follow at residues 300–408, 420–521, 525–633, 636–739, 743–843, 848–948, 954–1057, 1060–1166, 1170–1272, 1276–1376, 1386–1484, 1488–1591, 1594–1697, 1701–1802, 1807–1909, 1913–2015, and 2020–2089; these read VHDY…ALRE, AARF…MRLE, QLQQ…RLEE, KLWQ…RLEN, YFQL…QRLL, LYKL…MDDL, VQTF…KLEE, DLHR…VLLS, DQQL…EKLK, KLHE…GAML, QQTC…KALE, EAFQ…HLLE, KVQQ…RLNE, LFML…TQML, ELHK…QKLA, DLFR…ENLQ, and VYQF…KEMK. The segment covering 2097–2140 has biased composition (basic and acidic residues); it reads EAERQRIKEEQEAKAASEAAEQAKREAERRDDVDVGASHDDSER. Residues 2097–2152 form a disordered region; sequence EAERQRIKEEQEAKAASEAAEQAKREAERRDDVDVGASHDDSERGGTPGAGEGHEG. Positions 2147–2259 constitute a PH domain; the sequence is GEGHEGYVTR…WVTSLKAQSD (113 aa). Position 2195 is a phosphoserine (Ser-2195). Residues 2262-2275 are compositionally biased toward polar residues; sequence AVAASRSQTLPATS. A disordered region spans residues 2262–2291; that stretch reads AVAASRSQTLPATSQKDEPKRRSFFTLKKK.

It belongs to the spectrin family. Native spectrin molecule is a tetramer composed of two antiparallel heterodimers joined head to head so that each end of the native molecule includes the C-terminus of the alpha subunit and the N-terminus of the beta subunit.

It is found in the cytoplasm. The protein localises to the cytoskeleton. Its subcellular location is the cell cortex. Its function is as follows. Spectrin is the major constituent of the cytoskeletal network underlying the erythrocyte plasma membrane. It associates with band 4.1 and actin to form the cytoskeletal superstructure of the erythrocyte plasma membrane. Interacts with calmodulin in a calcium-dependent manner. In Drosophila melanogaster (Fruit fly), this protein is Spectrin beta chain (beta-Spec).